The following is a 218-amino-acid chain: Ependymin (218 aa).

Positions 1-20 are cleaved as a signal peptide; that stretch reads MHTVKLLCVVFSCLCAVAWG. N-linked (GlcNAc...) asparagine glycans are attached at residues N74 and N97.

It belongs to the ependymin family. As to quaternary structure, forms disulfide-linked dimers. Binds calcium through the terminal sialic acids.

The protein resides in the secreted. May play a role in neural plasticity. May be involved during axon regeneration. This chain is Ependymin (epd), found in Devario aequipinnatus (Giant danio).